Consider the following 229-residue polypeptide: Large ribosomal subunit protein uL1 (229 aa).

This sequence belongs to the universal ribosomal protein uL1 family. In terms of assembly, part of the 50S ribosomal subunit.

Its function is as follows. Binds directly to 23S rRNA. The L1 stalk is quite mobile in the ribosome, and is involved in E site tRNA release. Functionally, protein L1 is also a translational repressor protein, it controls the translation of the L11 operon by binding to its mRNA. The chain is Large ribosomal subunit protein uL1 from Clostridium tetani (strain Massachusetts / E88).